Reading from the N-terminus, the 129-residue chain is Small ribosomal subunit protein uS8 (129 aa).

The protein belongs to the universal ribosomal protein uS8 family. As to quaternary structure, part of the 30S ribosomal subunit. Contacts proteins S5 and S12.

In terms of biological role, one of the primary rRNA binding proteins, it binds directly to 16S rRNA central domain where it helps coordinate assembly of the platform of the 30S subunit. This is Small ribosomal subunit protein uS8 from Mesoplasma florum (strain ATCC 33453 / NBRC 100688 / NCTC 11704 / L1) (Acholeplasma florum).